A 483-amino-acid chain; its full sequence is Argininosuccinate lyase (483 aa).

This sequence belongs to the lyase 1 family. Argininosuccinate lyase subfamily.

It localises to the cytoplasm. The enzyme catalyses 2-(N(omega)-L-arginino)succinate = fumarate + L-arginine. It functions in the pathway amino-acid biosynthesis; L-arginine biosynthesis; L-arginine from L-ornithine and carbamoyl phosphate: step 3/3. This is Argininosuccinate lyase from Albidiferax ferrireducens (strain ATCC BAA-621 / DSM 15236 / T118) (Rhodoferax ferrireducens).